A 470-amino-acid chain; its full sequence is Argininosuccinate lyase (470 aa).

Belongs to the lyase 1 family. Argininosuccinate lyase subfamily.

Its subcellular location is the cytoplasm. The enzyme catalyses 2-(N(omega)-L-arginino)succinate = fumarate + L-arginine. Its pathway is amino-acid biosynthesis; L-arginine biosynthesis; L-arginine from L-ornithine and carbamoyl phosphate: step 3/3. In Synechococcus sp. (strain WH7803), this protein is Argininosuccinate lyase.